Consider the following 565-residue polypeptide: Oxygen-dependent choline dehydrogenase (565 aa).

7-36 (DYIICGAGSAGNVLATRLTEDPGVTVLLLE) contacts FAD. The Proton acceptor role is filled by His-474.

This sequence belongs to the GMC oxidoreductase family. Requires FAD as cofactor.

The catalysed reaction is choline + A = betaine aldehyde + AH2. It catalyses the reaction betaine aldehyde + NAD(+) + H2O = glycine betaine + NADH + 2 H(+). The protein operates within amine and polyamine biosynthesis; betaine biosynthesis via choline pathway; betaine aldehyde from choline (cytochrome c reductase route): step 1/1. Its function is as follows. Involved in the biosynthesis of the osmoprotectant glycine betaine. Catalyzes the oxidation of choline to betaine aldehyde and betaine aldehyde to glycine betaine at the same rate. The sequence is that of Oxygen-dependent choline dehydrogenase from Burkholderia mallei (strain ATCC 23344).